Here is an 87-residue protein sequence, read N- to C-terminus: Asparagine--tRNA ligase, cytoplasmic (87 aa).

This sequence belongs to the class-II aminoacyl-tRNA synthetase family.

It localises to the cytoplasm. The catalysed reaction is tRNA(Asn) + L-asparagine + ATP = L-asparaginyl-tRNA(Asn) + AMP + diphosphate + H(+). In Saccharomyces paradoxus (Yeast), this protein is Asparagine--tRNA ligase, cytoplasmic (DED81).